The following is a 250-amino-acid chain: Hydroxyethylthiazole kinase (250 aa).

A substrate-binding site is contributed by Met-39. 2 residues coordinate ATP: Arg-114 and Thr-159. Residue Gly-186 participates in substrate binding.

The protein belongs to the Thz kinase family. Mg(2+) is required as a cofactor.

It catalyses the reaction 5-(2-hydroxyethyl)-4-methylthiazole + ATP = 4-methyl-5-(2-phosphooxyethyl)-thiazole + ADP + H(+). It functions in the pathway cofactor biosynthesis; thiamine diphosphate biosynthesis; 4-methyl-5-(2-phosphoethyl)-thiazole from 5-(2-hydroxyethyl)-4-methylthiazole: step 1/1. Catalyzes the phosphorylation of the hydroxyl group of 4-methyl-5-beta-hydroxyethylthiazole (THZ). The polypeptide is Hydroxyethylthiazole kinase (Lactococcus lactis subsp. cremoris (strain MG1363)).